Here is a 520-residue protein sequence, read N- to C-terminus: Cytochrome P450 84A1 (520 aa).

M1 is subject to N-acetylmethionine. The chain crosses the membrane as a helical span at residues 12–32 (LSDPTTSLVIVVSLFIFISFI). C458 provides a ligand contact to heme.

Belongs to the cytochrome P450 family. It depends on heme as a cofactor.

Its subcellular location is the membrane. It participates in aromatic compound metabolism; phenylpropanoid biosynthesis. The polypeptide is Cytochrome P450 84A1 (CYP84A1) (Arabidopsis thaliana (Mouse-ear cress)).